The sequence spans 95 residues: Small ribosomal subunit protein bS6 (95 aa).

Belongs to the bacterial ribosomal protein bS6 family.

Its function is as follows. Binds together with bS18 to 16S ribosomal RNA. This chain is Small ribosomal subunit protein bS6, found in Clostridium beijerinckii (strain ATCC 51743 / NCIMB 8052) (Clostridium acetobutylicum).